The following is a 263-amino-acid chain: L-histidine 2-aminobutanoyltransferase (263 aa).

Belongs to the methyltransferase superfamily. CntL family.

It catalyses the reaction L-histidine + S-adenosyl-L-methionine = (2S)-2-amino-4-{[(1S)-1-carboxy-2-(1H-imidazol-4-yl)ethyl]amino}butanoate + S-methyl-5'-thioadenosine + H(+). In terms of biological role, catalyzes the nucleophilic attack of one alpha-aminobutanoate moiety from SAM onto L-histidine to produce the intermediate (2S)-2-amino-4-{[(1S)-1-carboxy-2-(1H-imidazol-4-yl)ethyl]amino}butanoate. Functions in the biosynthesis of the metallophore pseudopaline, which is involved in the acquisition of nickel and zinc, and thus enables bacterial growth inside the host, where metal access is limited. Therefore, this enzyme probably contributes to Pseudomonas virulence. Appears to be specific for L-histidine as substrate. The chain is L-histidine 2-aminobutanoyltransferase from Pseudomonas aeruginosa (strain ATCC 15692 / DSM 22644 / CIP 104116 / JCM 14847 / LMG 12228 / 1C / PRS 101 / PAO1).